We begin with the raw amino-acid sequence, 372 residues long: sn-glycerol-3-phosphate import ATP-binding protein UgpC (372 aa).

The ABC transporter domain maps to leucine 2–isoleucine 233. Glycine 35 to serine 42 serves as a coordination point for ATP.

The protein belongs to the ABC transporter superfamily. sn-glycerol-3-phosphate importer (TC 3.A.1.1.3) family. The complex is composed of two ATP-binding proteins (UgpC), two transmembrane proteins (UgpA and UgpE) and a solute-binding protein (UgpB).

It localises to the cell inner membrane. It catalyses the reaction sn-glycerol 3-phosphate(out) + ATP + H2O = sn-glycerol 3-phosphate(in) + ADP + phosphate + H(+). In terms of biological role, part of the ABC transporter complex UgpBAEC involved in sn-glycerol-3-phosphate (G3P) import. Responsible for energy coupling to the transport system. This is sn-glycerol-3-phosphate import ATP-binding protein UgpC from Vibrio cholerae serotype O1 (strain ATCC 39315 / El Tor Inaba N16961).